The primary structure comprises 395 residues: Flap endonuclease 1 (395 aa).

The tract at residues 1–104 (MGIKHLYQVI…GELAKRVARK (104 aa)) is N-domain. Asp-34 is a Mg(2+) binding site. Positions 47 and 70 each coordinate DNA. Asp-86, Glu-158, Glu-160, Asp-179, and Asp-181 together coordinate Mg(2+). The segment at 122 to 253 (DIEKFSRRTV…TTALSLIKEH (132 aa)) is I-domain. Glu-158 is a DNA binding site. 2 residues coordinate DNA: Gly-231 and Asp-233. Asp-233 contributes to the Mg(2+) binding site. The interaction with PCNA stretch occupies residues 341-349 (QQSRLEGFF). The disordered stretch occupies residues 345–395 (LEGFFKPVARTEDEKASLKRKHDEKLQQQKKKKKEDAKAKKEAKAKPRGAA). Composition is skewed to basic and acidic residues over residues 353–371 (ARTEDEKASLKRKHDEKLQ) and 378–389 (KEDAKAKKEAKA).

This sequence belongs to the XPG/RAD2 endonuclease family. FEN1 subfamily. As to quaternary structure, interacts with PCNA. Three molecules of fen1 bind to one PCNA trimer with each molecule binding to one PCNA monomer. PCNA stimulates the nuclease activity without altering cleavage specificity. It depends on Mg(2+) as a cofactor. In terms of processing, phosphorylated. Phosphorylation upon DNA damage induces relocalization to the nuclear plasma.

Its subcellular location is the nucleus. The protein localises to the nucleolus. It localises to the nucleoplasm. It is found in the mitochondrion. Structure-specific nuclease with 5'-flap endonuclease and 5'-3' exonuclease activities involved in DNA replication and repair. During DNA replication, cleaves the 5'-overhanging flap structure that is generated by displacement synthesis when DNA polymerase encounters the 5'-end of a downstream Okazaki fragment. It enters the flap from the 5'-end and then tracks to cleave the flap base, leaving a nick for ligation. Also involved in the long patch base excision repair (LP-BER) pathway, by cleaving within the apurinic/apyrimidinic (AP) site-terminated flap. Acts as a genome stabilization factor that prevents flaps from equilibrating into structures that lead to duplications and deletions. Also possesses 5'-3' exonuclease activity on nicked or gapped double-stranded DNA, and exhibits RNase H activity. Also involved in replication and repair of rDNA and in repairing mitochondrial DNA. The polypeptide is Flap endonuclease 1 (fen1) (Penicillium rubens (strain ATCC 28089 / DSM 1075 / NRRL 1951 / Wisconsin 54-1255) (Penicillium chrysogenum)).